The following is a 440-amino-acid chain: MSAVLVSKENNQAVFTCEIPAEDFNNAIEESYKKNRSRFSLKGFRKGKVPRKMLERAYGEGLFYEDAVNLLLPGIYEKAIEELELEPVSQPDIDLDDITENNDVKVKFTVDLKPEFELGDYSKLSAEIEEFKVTDSDVDMKVNHELESNARVQEVEGREAKENDTVSINFKGFVDDKAFDGGEAEDYELVLGSHTFIPGFEEQIVGHNAGDEFDVNVKFPEDYHEDSLKGKDAKFECKINSIKEKVLPELDDEFVKDVSEFDTLDEYKKDIKEHLEKDNEQRQLVEKQNKAVEALIEATEISVPESMIDNEVNRQFQDFARRVQQMGLNTDQYFQITNTSEEDVKNELRANAELKVKGDLVLEKYIEKEAIESTDEELDEQLKEFAKVYGKDDEEKFIEEFKNSPNVEFLKEDIKRKKALEKLVENTKFEIKKAEEKEDK.

Positions 163 to 248 (NDTVSINFKG…INSIKEKVLP (86 aa)) constitute a PPIase FKBP-type domain.

It belongs to the FKBP-type PPIase family. Tig subfamily.

The protein localises to the cytoplasm. The catalysed reaction is [protein]-peptidylproline (omega=180) = [protein]-peptidylproline (omega=0). Involved in protein export. Acts as a chaperone by maintaining the newly synthesized protein in an open conformation. Functions as a peptidyl-prolyl cis-trans isomerase. In Finegoldia magna (strain ATCC 29328 / DSM 20472 / WAL 2508) (Peptostreptococcus magnus), this protein is Trigger factor.